A 60-amino-acid chain; its full sequence is Large ribosomal subunit protein uL30 (60 aa).

It belongs to the universal ribosomal protein uL30 family. As to quaternary structure, part of the 50S ribosomal subunit.

The protein is Large ribosomal subunit protein uL30 of Lachnoclostridium phytofermentans (strain ATCC 700394 / DSM 18823 / ISDg) (Clostridium phytofermentans).